A 213-amino-acid polypeptide reads, in one-letter code: Thymidylate kinase (213 aa).

Glycine 10–threonine 17 provides a ligand contact to ATP.

The protein belongs to the thymidylate kinase family.

The catalysed reaction is dTMP + ATP = dTDP + ADP. Phosphorylation of dTMP to form dTDP in both de novo and salvage pathways of dTTP synthesis. The polypeptide is Thymidylate kinase (Escherichia coli O6:K15:H31 (strain 536 / UPEC)).